Consider the following 286-residue polypeptide: Pantothenate synthetase (286 aa).

30–37 lines the ATP pocket; sequence MGYFHEGH. His37 functions as the Proton donor in the catalytic mechanism. Gln61 lines the (R)-pantoate pocket. Gln61 lines the beta-alanine pocket. 147-150 provides a ligand contact to ATP; sequence GKKD. Gln153 is a binding site for (R)-pantoate. Position 184–187 (184–187) interacts with ATP; sequence MSSR.

This sequence belongs to the pantothenate synthetase family. As to quaternary structure, homodimer.

The protein localises to the cytoplasm. The catalysed reaction is (R)-pantoate + beta-alanine + ATP = (R)-pantothenate + AMP + diphosphate + H(+). It participates in cofactor biosynthesis; (R)-pantothenate biosynthesis; (R)-pantothenate from (R)-pantoate and beta-alanine: step 1/1. Catalyzes the condensation of pantoate with beta-alanine in an ATP-dependent reaction via a pantoyl-adenylate intermediate. The polypeptide is Pantothenate synthetase (Syntrophus aciditrophicus (strain SB)).